We begin with the raw amino-acid sequence, 434 residues long: Adenylosuccinate synthetase (434 aa).

Residues G22–K28 and G50–T52 each bind GTP. The Proton acceptor role is filled by D23. Mg(2+) contacts are provided by D23 and G50. Residues D23–K26, N48–H51, T139, R153, Q234, T249, and R313 each bind IMP. H51 serves as the catalytic Proton donor. Substrate is bound at residue A309 to R315. GTP contacts are provided by residues R315, K341 to D343, and S423 to G425.

The protein belongs to the adenylosuccinate synthetase family. In terms of assembly, homodimer. Mg(2+) serves as cofactor.

Its subcellular location is the cytoplasm. The enzyme catalyses IMP + L-aspartate + GTP = N(6)-(1,2-dicarboxyethyl)-AMP + GDP + phosphate + 2 H(+). It functions in the pathway purine metabolism; AMP biosynthesis via de novo pathway; AMP from IMP: step 1/2. Functionally, plays an important role in the de novo pathway of purine nucleotide biosynthesis. Catalyzes the first committed step in the biosynthesis of AMP from IMP. The polypeptide is Adenylosuccinate synthetase (Chlorobium luteolum (strain DSM 273 / BCRC 81028 / 2530) (Pelodictyon luteolum)).